A 688-amino-acid polypeptide reads, in one-letter code: MPNHQSGSPTGSSDLLLSGKKQRPHLALRRKRRREMRKINRKVRRMNLAPIKEKTAWQHLQALISEAEEVLKTSQTPQNSLTLFLALLSVLGPPPVTGESYWAYLPKPPILHPVGWGSTDPIRVLTNQTMYLGGSPDFHGFRNMSGNVHFEGKSDTLPICFSFSFSTPTGCFQVDKQVFLSDTPTVDNNKPGGKGDKRRMWELWLHTLGNSGANTKLVPIKKKLPPKYPHCQIAFKKDAFWEGDESAPPRWLPCAFPDKGVSFSPKGALGLLWDFSLPSPSVDQSDQIKSKKDLFGNYTPPVNKEVHRWYEAGWVEPTWFWENSPKDPNDRDFTALVPHTELFRLVAASRHLILKRPGFQEHEMIPTSACVTYPYAILLGLPQLIDIEKRGSTFHISCSSCRLTNCLDSSAYDYAAIIVKRPPYVLLPVDIGDEPWFDDSAIQTFRYATDLIRAKRFVAAIILGISALIAIITSFAVATTALVKEMQTATFVNNLHRNVTLALSEQRIIDLKLEARLNALEEVVLELGQDVANLKTRMSTRCHANYDFICVTPLPYNATEDWERTRAHLLGIWNDNEISYNIQELTNLISDMSKQHIDAVDLSGLAQSFANGVKALNPLDWTQYFIFIGVGALLLVIVLMIFPIVFQCLAKSLDQVQSDLNVLLLKKKKGGNAAPAAEMVELPRVSYT.

Polar residues predominate over residues 1–15 (MPNHQSGSPTGSSDL). Residues 1 to 31 (MPNHQSGSPTGSSDLLLSGKKQRPHLALRRK) are disordered. An N-terminal signal peptide occupies residues 1–98 (MPNHQSGSPT…SVLGPPPVTG (98 aa)). The segment covering 20–31 (KKQRPHLALRRK) has biased composition (basic residues). Residues 99–624 (ESYWAYLPKP…ALNPLDWTQY (526 aa)) are Extracellular-facing. Residues Asn127 and Asn143 are each glycosylated (N-linked (GlcNAc...) asparagine; by host). Positions 426 to 474 (LLPVDIGDEPWFDDSAIQTFRYATDLIRAKRFVAAIILGISALIAIITS) form a coiled coil. The propeptide occupies 455–456 (KR). Positions 457-477 (FVAAIILGISALIAIITSFAV) are fusion peptide. The segment at 463–481 (LGISALIAIITSFAVATTA) is immunosuppression. The N-linked (GlcNAc...) asparagine; by host glycan is linked to Asn498. A coiled-coil region spans residues 511–541 (LKLEARLNALEEVVLELGQDVANLKTRMSTR). N-linked (GlcNAc...) asparagine; by host glycosylation occurs at Asn557. Residues 625 to 645 (FIFIGVGALLLVIVLMIFPIV) form a helical membrane-spanning segment. The Cytoplasmic segment spans residues 646–688 (FQCLAKSLDQVQSDLNVLLLKKKKGGNAAPAAEMVELPRVSYT).

The mature envelope protein (Env) consists of a trimer of SU-TM heterodimers attached by noncovalent interactions or by a labile interchain disulfide bond. Specific enzymatic cleavages in vivo yield mature proteins. Envelope glycoproteins are synthesized as an inactive precursor that is N-glycosylated and processed likely by host cell furin or by a furin-like protease in the Golgi to yield the mature SU and TM proteins. The cleavage site between SU and TM requires the minimal sequence [KR]-X-[KR]-R.

Its subcellular location is the virion membrane. It is found in the host cell membrane. In terms of biological role, the surface protein (SU) attaches the virus to the host cell by binding to its receptor. This interaction triggers the refolding of the transmembrane protein (TM) and is thought to activate its fusogenic potential by unmasking its fusion peptide. Fusion occurs at the host cell plasma membrane. Functionally, the transmembrane protein (TM) acts as a class I viral fusion protein. Under the current model, the protein has at least 3 conformational states: pre-fusion native state, pre-hairpin intermediate state, and post-fusion hairpin state. During viral and target cell membrane fusion, the coiled coil regions (heptad repeats) assume a trimer-of-hairpins structure, positioning the fusion peptide in close proximity to the C-terminal region of the ectodomain. The formation of this structure appears to drive apposition and subsequent fusion of viral and target cell membranes. Membranes fusion leads to delivery of the nucleocapsid into the cytoplasm. In Mus musculus (Mouse), this protein is Envelope glycoprotein gp70 (env).